Reading from the N-terminus, the 237-residue chain is Segregation and condensation protein A (237 aa).

It belongs to the ScpA family. In terms of assembly, component of a cohesin-like complex composed of ScpA, ScpB and the Smc homodimer, in which ScpA and ScpB bind to the head domain of Smc. The presence of the three proteins is required for the association of the complex with DNA.

The protein localises to the cytoplasm. Functionally, participates in chromosomal partition during cell division. May act via the formation of a condensin-like complex containing Smc and ScpB that pull DNA away from mid-cell into both cell halves. In Streptococcus thermophilus (strain CNRZ 1066), this protein is Segregation and condensation protein A.